The primary structure comprises 181 residues: Regulator of G-protein signaling 10 (181 aa).

A disordered region spans residues 1 to 35 (MFTRAVSRLSRKRPPSDIHDGDGSSSSGHQSLKST). Residues Ser-24 and Ser-41 each carry the phosphoserine modification. The region spanning 41–156 (SLENLLEDPE…LKSDLFLKPK (116 aa)) is the RGS domain. Cys-74 carries S-palmitoyl cysteine lipidation. Residues 155-181 (PKRTEEEEEEPPDAQTAAKRASRIYNT) form a disordered region. Position 176 is a phosphoserine (Ser-176).

As to quaternary structure, interacts with GNAZ, GNAI1 and GNAI3. Associates specifically with the activated, GTP-bound forms of GNAZ and GNAI3.

The protein resides in the cytoplasm. It is found in the cytosol. It localises to the nucleus. In terms of biological role, regulates G protein-coupled receptor signaling cascades, including signaling downstream of the muscarinic acetylcholine receptor CHRM2. Inhibits signal transduction by increasing the GTPase activity of G protein alpha subunits, thereby driving them into their inactive GDP-bound form. Modulates the activity of potassium channels that are activated in response to CHRM2 signaling. Activity on GNAZ is inhibited by palmitoylation of the G-protein. This is Regulator of G-protein signaling 10 (Rgs10) from Mus musculus (Mouse).